Reading from the N-terminus, the 456-residue chain is Hydroxyproline dehydrogenase (456 aa).

Lys310 and Lys320 each carry N6-acetyllysine.

It belongs to the proline oxidase family. FAD serves as cofactor.

It carries out the reaction trans-4-hydroxy-L-proline + a quinone = (3R,5S)-1-pyrroline-3-hydroxy-5-carboxylate + a quinol + H(+). The enzyme catalyses L-proline + a quinone = (S)-1-pyrroline-5-carboxylate + a quinol + H(+). Dehydrogenase that converts trans-4-L-hydroxyproline to delta-1-pyrroline-3-hydroxy-5-carboxylate (Hyp) using ubiquinone-10 as the terminal electron acceptor. Can also use proline as a substrate but with a very much lower efficiency. Does not react with other diastereomers of Hyp: trans-4-D-hydroxyproline and cis-4-L-hydroxyproline. Ubiquininone analogs such as menadione, duroquinone and ubiquinone-1 react more efficiently than oxygen as the terminal electron acceptor during catalysis. In Mus musculus (Mouse), this protein is Hydroxyproline dehydrogenase.